A 409-amino-acid chain; its full sequence is NADH-quinone oxidoreductase subunit D (409 aa).

It belongs to the complex I 49 kDa subunit family. As to quaternary structure, NDH-1 is composed of 14 different subunits. Subunits NuoB, C, D, E, F, and G constitute the peripheral sector of the complex.

The protein resides in the cell inner membrane. It catalyses the reaction a quinone + NADH + 5 H(+)(in) = a quinol + NAD(+) + 4 H(+)(out). NDH-1 shuttles electrons from NADH, via FMN and iron-sulfur (Fe-S) centers, to quinones in the respiratory chain. The immediate electron acceptor for the enzyme in this species is believed to be ubiquinone. Couples the redox reaction to proton translocation (for every two electrons transferred, four hydrogen ions are translocated across the cytoplasmic membrane), and thus conserves the redox energy in a proton gradient. This chain is NADH-quinone oxidoreductase subunit D, found in Helicobacter hepaticus (strain ATCC 51449 / 3B1).